Here is an 829-residue protein sequence, read N- to C-terminus: Trimethylamine-N-oxide reductase (829 aa).

The segment at residues 1 to 31 (MNRRDFLKGIASSSFVVLGGSSVLTPLNALA) is a signal peptide (tat-type signal). Residue Ser-180 coordinates Mo-bis(molybdopterin guanine dinucleotide).

Belongs to the prokaryotic molybdopterin-containing oxidoreductase family. The cofactor is Mo-bis(molybdopterin guanine dinucleotide). In terms of processing, predicted to be exported by the Tat system. The position of the signal peptide cleavage has been experimentally proven.

It localises to the periplasm. The enzyme catalyses trimethylamine + 2 Fe(III)-[cytochrome c] + H2O = trimethylamine N-oxide + 2 Fe(II)-[cytochrome c] + 3 H(+). Reduces trimethylamine-N-oxide (TMAO) into trimethylamine; an anaerobic reaction coupled to energy-yielding reactions. The sequence is that of Trimethylamine-N-oxide reductase (torA) from Shewanella massilia.